We begin with the raw amino-acid sequence, 806 residues long: Leucine--tRNA ligase (806 aa).

Positions 54–64 (SYPSGDLHMGH) match the 'HIGH' region motif. The 'KMSKS' region motif lies at 571-575 (KMSKS). An ATP-binding site is contributed by Lys574.

It belongs to the class-I aminoacyl-tRNA synthetase family.

It is found in the cytoplasm. The enzyme catalyses tRNA(Leu) + L-leucine + ATP = L-leucyl-tRNA(Leu) + AMP + diphosphate. The chain is Leucine--tRNA ligase from Tropheryma whipplei (strain TW08/27) (Whipple's bacillus).